We begin with the raw amino-acid sequence, 343 residues long: Ribosomal RNA small subunit methyltransferase C (343 aa).

Belongs to the methyltransferase superfamily. RsmC family. As to quaternary structure, monomer.

The protein localises to the cytoplasm. It catalyses the reaction guanosine(1207) in 16S rRNA + S-adenosyl-L-methionine = N(2)-methylguanosine(1207) in 16S rRNA + S-adenosyl-L-homocysteine + H(+). Functionally, specifically methylates the guanine in position 1207 of 16S rRNA in the 30S particle. The polypeptide is Ribosomal RNA small subunit methyltransferase C (Escherichia coli O157:H7).